The chain runs to 380 residues: MAPNIRKSHPLLKIINTSLIDLPAPSNISAWWNFGSLLAMCLMTQIITGLLLATHYTADTTLAFSSVAHTCRNVQYGWLIRNLHANGASFFFICIYLHIGRGLYYGSYLYKETWNTGVILLLTLMATAFVGYVLHEGQMSFWGATVITNLFSAIPYIGQTLVEWAWGGFSVDNPTLTRFFALHFLLPFIIAGITIIHLAFLHESGSNNPLGISSDSDKIPFHPYYSLKDILGLALMITPLLTLALFSPNLLGDPENFTPANPLTTPPHIKPEWYFLFAYAILRSIPNKLGGVLALAASVLILLLIPFLHKSKQRTMTFRPLSQILFWLLAANLLILTWIGSQPVEHPFIIIGQLASFSYFTTILILFPIIGTLENKMLNY.

Transmembrane regions (helical) follow at residues F34 to T54, W78 to I99, W114 to L134, and F179 to A199. Heme b-binding residues include H84 and H98. The heme b site is built by H183 and H197. H202 serves as a coordination point for a ubiquinone. The next 4 helical transmembrane spans lie at L227–S247, L289–H309, L321–S341, and F348–P368.

Belongs to the cytochrome b family. In terms of assembly, the cytochrome bc1 complex contains 11 subunits: 3 respiratory subunits (MT-CYB, CYC1 and UQCRFS1), 2 core proteins (UQCRC1 and UQCRC2) and 6 low-molecular weight proteins (UQCRH/QCR6, UQCRB/QCR7, UQCRQ/QCR8, UQCR10/QCR9, UQCR11/QCR10 and a cleavage product of UQCRFS1). This cytochrome bc1 complex then forms a dimer. It depends on heme b as a cofactor.

Its subcellular location is the mitochondrion inner membrane. Component of the ubiquinol-cytochrome c reductase complex (complex III or cytochrome b-c1 complex) that is part of the mitochondrial respiratory chain. The b-c1 complex mediates electron transfer from ubiquinol to cytochrome c. Contributes to the generation of a proton gradient across the mitochondrial membrane that is then used for ATP synthesis. This Callipepla gambelii (Gambel's quail) protein is Cytochrome b (MT-CYB).